We begin with the raw amino-acid sequence, 501 residues long: CaM kinase-like vesicle-associated protein (501 aa).

Residues 24-286 enclose the Protein kinase domain; that stretch reads YDLGQVIKTE…AEEAISHEWI (263 aa). The segment at 327–501 is disordered; it reads RAPEQSSTAA…AQESQREEAS (175 aa). Over residues 331–365 the composition is skewed to low complexity; it reads QSSTAAAQSASATDTATPGAAGGATAAAASGATSA. Positions 387 to 428 are enriched in polar residues; it reads TPATDGSATPATDGSVTPATDGSITPATDGSVTPATDRSATP. Thr-435 carries the post-translational modification Phosphothreonine. The span at 438–451 shows a compositional bias: polar residues; it reads TEESTVPTTQSSAM. Phosphothreonine is present on Thr-459.

This sequence belongs to the protein kinase superfamily. CAMK Ser/Thr protein kinase family. As to quaternary structure, interacts with calmodulin, in the presence of calcium. It depends on Ca(2+) as a cofactor.

The protein resides in the cell membrane. It is found in the cytoplasmic vesicle membrane. In terms of biological role, does not appear to have detectable kinase activity. This is CaM kinase-like vesicle-associated protein (CAMKV) from Homo sapiens (Human).